The sequence spans 176 residues: UPF0262 protein GbCGDNIH1_1393 (176 aa).

It belongs to the UPF0262 family.

The sequence is that of UPF0262 protein GbCGDNIH1_1393 from Granulibacter bethesdensis (strain ATCC BAA-1260 / CGDNIH1).